Reading from the N-terminus, the 258-residue chain is Type III pantothenate kinase (258 aa).

Residue 12–19 (DIGNTSIA) coordinates ATP. Residues Tyr-94 and 109 to 112 (GSDV) contribute to the substrate site. Catalysis depends on Asp-111, which acts as the Proton acceptor. Asp-132 lines the K(+) pocket. An ATP-binding site is contributed by Thr-135. Thr-187 lines the substrate pocket.

This sequence belongs to the type III pantothenate kinase family. As to quaternary structure, homodimer. NH4(+) serves as cofactor. The cofactor is K(+).

The protein resides in the cytoplasm. The catalysed reaction is (R)-pantothenate + ATP = (R)-4'-phosphopantothenate + ADP + H(+). It functions in the pathway cofactor biosynthesis; coenzyme A biosynthesis; CoA from (R)-pantothenate: step 1/5. In terms of biological role, catalyzes the phosphorylation of pantothenate (Pan), the first step in CoA biosynthesis. This Borreliella afzelii (strain PKo) (Borrelia afzelii) protein is Type III pantothenate kinase.